The sequence spans 41 residues: Protein UL21 homolog (41 aa).

Belongs to the herpesviridae UL21 family.

This Equine herpesvirus 4 (strain 1942) (EHV-4) protein is Protein UL21 homolog.